The following is a 117-amino-acid chain: MARVKTGVVRRRRHKKVLKLARGFYSGRRKHFRKAKEQLERSLVYAYRDRRRKKRDFRRLWIVRINAACRLNDLSYSRFINGLKKAGIELDRKILADLAMNDAAAFAKIAEAAKKAL.

This sequence belongs to the bacterial ribosomal protein bL20 family.

Binds directly to 23S ribosomal RNA and is necessary for the in vitro assembly process of the 50S ribosomal subunit. It is not involved in the protein synthesizing functions of that subunit. The sequence is that of Large ribosomal subunit protein bL20 from Campylobacter jejuni subsp. jejuni serotype O:2 (strain ATCC 700819 / NCTC 11168).